A 174-amino-acid polypeptide reads, in one-letter code: Period clock protein (174 aa).

The interval 46–134 (SSEGTGAGTG…GTGTGTGTGT (89 aa)) is disordered. 45 tandem repeats follow at residues 49–50 (GT), 51–52 (GA), 53–54 (GT), 55–56 (GT), 57–58 (GT), 59–60 (GT), 61–62 (GT), 63–64 (GT), 65–66 (GT), 67–68 (GT), 69–70 (GT), 71–72 (GT), 73–74 (GT), 75–76 (GT), 77–78 (GT), 79–80 (GT), 81–82 (GT), 83–84 (GT), 85–86 (GT), 87–88 (GT), 89–90 (GT), 91–92 (GT), 93–94 (GT), 95–96 (GT), 97–98 (GT), 99–100 (GT), 101–102 (GT), 103–104 (GT), 105–106 (GT), 107–108 (GT), 109–110 (GT), 111–112 (GT), 113–114 (GT), 115–116 (GT), 117–118 (GT), 119–120 (GT), 121–122 (GT), 123–124 (GT), 125–126 (GT), 127–128 (GT), 129–130 (GT), 131–132 (GT), 133–134 (GT), 135–136 (GT), and 137–138 (GT). A 45 X 2 AA tandem repeats of G-[TA] region spans residues 49–138 (GTGAGTGTGT…GTGTGTGTGT (90 aa)). Residues 50 to 134 (TGAGTGTGTG…GTGTGTGTGT (85 aa)) show a composition bias toward gly residues.

The protein resides in the plastid. Its subcellular location is the chloroplast. The chain is Period clock protein from Acetabularia acetabulum (Mermaid's wine glass).